The sequence spans 637 residues: ATP-dependent zinc metalloprotease FtsH (637 aa).

The Cytoplasmic segment spans residues 1–44 (MAKHSQHSSPPRKLFDTLNDLWQRAKSEAGLSAEGPEGTRRRNN). Residues 45 to 65 (LILYLLLVLSTLYLLNGYQTL) traverse the membrane as a helical segment. The Periplasmic segment spans residues 66 to 141 (RNEEIPYSEF…TVRYGSNWFS (76 aa)). Residues 142–162 (SLIFNWIVPIVLLTLFWTWMA) form a helical membrane-spanning segment. Over 163-637 (RRMTGGRGFL…VKAVIREAAS (475 aa)) the chain is Cytoplasmic. 231 to 238 (GPPGTGKT) provides a ligand contact to ATP. Histidine 454 contributes to the Zn(2+) binding site. Glutamate 455 is a catalytic residue. Positions 458 and 531 each coordinate Zn(2+).

It in the central section; belongs to the AAA ATPase family. The protein in the C-terminal section; belongs to the peptidase M41 family. Homohexamer. The cofactor is Zn(2+).

It localises to the cell inner membrane. Acts as a processive, ATP-dependent zinc metallopeptidase for both cytoplasmic and membrane proteins. Plays a role in the quality control of integral membrane proteins. The sequence is that of ATP-dependent zinc metalloprotease FtsH from Methylococcus capsulatus (strain ATCC 33009 / NCIMB 11132 / Bath).